The following is a 1230-amino-acid chain: Protein transport protein Sec31A (1230 aa).

7 WD repeats span residues 4–47, 64–111, 120–160, 166–206, 209–254, 258–298, and 301–342; these read KEID…EIFE, SSSH…AGDK, KHTG…TPMT, QPPE…PIIK, DHSN…SPLR, NHAR…VLYE, and TNTQ…DGLR. An interaction with SEC13 region spans residues 161–470; sequence PGAKTQPPED…IEASQTEFEK (310 aa). A WD 8; interaction with SEC13 repeat occupies 397-429; that stretch reads SFSFGGKLVTFESVAVPLQQGAEQQRRQPVFIS. Position 423 is an asymmetric dimethylarginine (arginine 423). Phosphoserine is present on residues serine 526 and serine 531. A Glycyl lysine isopeptide (Lys-Gly) (interchain with G-Cter in ubiquitin) cross-link involves residue lysine 646. Disordered stretches follow at residues 789 to 905 and 924 to 1104; these read QGKP…ASNA and MYTA…PIGN. Serine 798 bears the Phosphoserine mark. The interaction with PDCD6 stretch occupies residues 799 to 1123; the sequence is SQSPYERQPL…TEKITKKPIP (325 aa). Residues 841 to 847 carry the ALG-2-binding site motif-2 (ABS-2) motif; sequence GFIMQGN. The span at 866 to 876 shows a compositional bias: pro residues; the sequence is QLPPYPQPQPY. Low complexity-rich tracts occupy residues 930–940 and 959–975; these read ASSPTSSSAAS and PSSS…GTPP. Composition is skewed to polar residues over residues 981 to 995 and 1033 to 1064; these read PASQ…QDQA and PIMN…SFPQ. A Phosphothreonine modification is found at threonine 1171. Serine 1173 bears the Phosphoserine mark. A Glycyl lysine isopeptide (Lys-Gly) (interchain with G-Cter in ubiquitin) cross-link involves residue lysine 1227.

This sequence belongs to the WD repeat SEC31 family. In terms of assembly, COPII is composed of at least 5 proteins: the SEC23/24 complex, the SEC13/31 complex and SAR1. SEC13 and SEC31 make a 2:2 tetramer that forms the edge element of the COPII outer coat. The tetramer self-assembles in multiple copies to form the complete polyhedral cage. Interacts (via WD 8) with SEC13. Interacts with PDCD6; interaction takes place in response to cytosolic calcium increase and leads to bridge together the BCR(KLHL12) complex and SEC31A, leading to monoubiquitination. Interacts with KLHL12. Post-translationally, monoubiquitinated by the BCR(KLHL12) E3 ubiquitin ligase complex, leading to regulate the size of COPII coats.

It localises to the cytoplasm. It is found in the cytoplasmic vesicle. Its subcellular location is the COPII-coated vesicle membrane. The protein localises to the endoplasmic reticulum membrane. Functionally, component of the coat protein complex II (COPII) which promotes the formation of transport vesicles from the endoplasmic reticulum (ER). The coat has two main functions, the physical deformation of the endoplasmic reticulum membrane into vesicles and the selection of cargo molecules. The sequence is that of Protein transport protein Sec31A (Sec31a) from Mus musculus (Mouse).